The chain runs to 226 residues: MNRIGILSRSDGSSEWKQGSARVICGVNGPIDVKIRDERLNKATVEVLVQPVSGVAETLEKMISSRIVGILEDAIFLNTYPRTLIQVSIQIIEEDGTDTLAAVINGAVLALLDAGISLKYIPCAINCHWKNKITQDEPDVDGTINKLESIITICYSISSEPAKLIFLETAGPIPEEDFFRVLETAPLHAEEVSKKMKELLFETYNESDGHENEKNPKEDVEMDVVA.

The tract at residues 205–226 (NESDGHENEKNPKEDVEMDVVA) is disordered. Residues 207–219 (SDGHENEKNPKED) are compositionally biased toward basic and acidic residues.

This sequence belongs to the RNase PH family. In terms of assembly, component of the RNA exosome complex. Specifically part of the catalytically inactive RNA exosome core complex (Exo-9) which may associate with the catalytic subunits rrp6 and dis3 in cytoplasmic- and nuclear-specific RNA exosome complex forms. Exo-9 is formed by a hexameric base ring of RNase PH domain-containing subunits and a cap ring consisting of csl4, rrp4 and rrp40.

The protein localises to the cytoplasm. It is found in the nucleus. Its subcellular location is the nucleolus. Functionally, non-catalytic component of the RNA exosome complex which has 3'-&gt;5' exoribonuclease activity and participates in a multitude of cellular RNA processing and degradation events. In the nucleus, the RNA exosome complex is involved in proper maturation of stable RNA species such as rRNA, snRNA and snoRNA, in the elimination of RNA processing by-products and non-coding 'pervasive' transcripts, such as antisense RNA species and cryptic unstable transcripts (CUTs), and of mRNAs with processing defects, thereby limiting or excluding their export to the cytoplasm. In the cytoplasm, the RNA exosome complex is involved in general mRNA turnover and in RNA surveillance pathways, preventing translation of aberrant mRNAs. The catalytic inactive RNA exosome core complex of 9 subunits (Exo-9) is proposed to play a pivotal role in the binding and presentation of RNA for ribonucleolysis, and to serve as a scaffold for the association with catalytic subunits and accessory proteins or complexes. ski6 is part of the hexameric ring of RNase PH domain-containing subunits proposed to form a central channel which threads RNA substrates for degradation. The sequence is that of Exosome complex component rrp46 (rrp46) from Schizosaccharomyces pombe (strain 972 / ATCC 24843) (Fission yeast).